We begin with the raw amino-acid sequence, 717 residues long: Photosystem I P700 chlorophyll a apoprotein A1 (717 aa).

The next 8 helical transmembrane spans lie at 58–81 (VFSA…FHGA), 144–167 (LYCT…FHYH), 183–207 (LNHH…HVSL), 279–297 (IAHH…GHMY), 334–357 (WHAQ…HHMY), 373–399 (LSLF…IFMV), 421–443 (AIIS…LYIH), and 519–537 (FLVH…LILL). [4Fe-4S] cluster is bound by residues Cys561 and Cys570. The next 2 membrane-spanning stretches (helical) occupy residues 577-598 (HVFL…HFSW) and 652-674 (LSAY…MFLF). Residue His663 participates in chlorophyll a' binding. Met671 and Tyr679 together coordinate chlorophyll a. Residue Trp680 coordinates phylloquinone. Residues 712–717 (AVGVTH) traverse the membrane as a helical segment.

This sequence belongs to the PsaA/PsaB family. The PsaA/B heterodimer binds the P700 chlorophyll special pair and subsequent electron acceptors. PSI consists of a core antenna complex that captures photons, and an electron transfer chain that converts photonic excitation into a charge separation. The eukaryotic PSI reaction center is composed of at least 11 subunits. P700 is a chlorophyll a/chlorophyll a' dimer, A0 is one or more chlorophyll a, A1 is one or both phylloquinones and FX is a shared 4Fe-4S iron-sulfur center. serves as cofactor.

It is found in the plastid. It localises to the chloroplast thylakoid membrane. The enzyme catalyses reduced [plastocyanin] + hnu + oxidized [2Fe-2S]-[ferredoxin] = oxidized [plastocyanin] + reduced [2Fe-2S]-[ferredoxin]. In terms of biological role, psaA and PsaB bind P700, the primary electron donor of photosystem I (PSI), as well as the electron acceptors A0, A1 and FX. PSI is a plastocyanin-ferredoxin oxidoreductase, converting photonic excitation into a charge separation, which transfers an electron from the donor P700 chlorophyll pair to the spectroscopically characterized acceptors A0, A1, FX, FA and FB in turn. Oxidized P700 is reduced on the lumenal side of the thylakoid membrane by plastocyanin. This Drimys winteri (Winter's bark) protein is Photosystem I P700 chlorophyll a apoprotein A1.